The sequence spans 637 residues: MAAMAVGGAGGSRVSSGRDLNCVPEIADTLGAVAKQGFDFLCMPVFHPRFKREFIQEPAKNRPGPQTRSDLLLSGRDWNTLIVGKLSPWIRPDSKVEKIRRNSEAAMLQELNFGAYLGLPAFLLPLNQEDNTNLARVLTNHIHTGHHSSMFWMRVPLVAPEDLRDDIIENAPTTHTEEYSGEEKTWMWWHNFRTLCDYSKRIAVALEIGADLPSNHVIDRWLGEPIKAAILPTSIFLTNKKGFPVLSKMHQRLIFRLLKLEVQFIITGTNHHSEKEFCSYLQYLEYLSQNRPPPNAYELFAKGYEDYLQSPLQPLMDNLESQTYEVFEKDPIKYSQYQQAIYKCLLDRVPEEEKDTNVQVLMVLGAGRGPLVNASLRAAKQADRRIKLYAVEKNPNAVVTLENWQFEEWGSQVTVVSSDMREWVAPEKADIIVSELLGSFADNELSPECLDGAQHFLKDDGVSIPGEYTSFLAPISSSKLYNEVRACREKDRDPEAQFEMPYVVRLHNFHQLSAPQPCFTFSHPNRDPMIDNNRYCTLEFPVEVNTVLHGFAGYFETVLYQDITLSIRPETHSPGMFSWFPILFPIKQPITVREGQTICVRFWRCSNSKKVWYEWAVTAPVCSAIHNPTGRSYTIGL.

N-acetylalanine; in Protein arginine N-methyltransferase 5, N-terminally processed is present on Ala2. The segment at 13 to 292 (RVSSGRDLNC…YLEYLSQNRP (280 aa)) is TIM barrel. Residues 308–615 (LQSPLQPLMD…SNSKKVWYEW (308 aa)) enclose the SAM-dependent MTase PRMT-type domain. Tyr324 contributes to the S-adenosyl-L-methionine binding site. Phe327 is an a protein binding site. S-adenosyl-L-methionine-binding positions include 333–334 (KY), Glu392, and 419–420 (DM). Residues Glu435 and Glu444 each coordinate a protein. Residues Glu435 and Glu444 each act as proton donor/acceptor in the active site. The segment at 465–637 (PGEYTSFLAP…PTGRSYTIGL (173 aa)) is beta barrel. Residues 488-494 (REKDRDP) form a dimerization region.

The protein belongs to the class I-like SAM-binding methyltransferase superfamily. Protein arginine N-methyltransferase family. In terms of assembly, forms, at least, homodimers and homotetramers. Component of the methylosome complex, composed of PRMT5, WDR77 and CLNS1A. Found in a complex composed of PRMT5, WDR77 and RIOK1. RIOK1 and CLNS1A associate with PRMT5 in a mutually exclusive fashion, which allows the recruitment of distinct methylation substrates, such as nucleolin/NCL and Sm proteins, respectively. Interacts with PRDM1. Identified in a complex composed of methylosome and PRMT1 and ERH. Interacts with EGFR; methylates EGFR and stimulates EGFR-mediated ERK activation. Interacts with HOXA9. Interacts with SRGAP2. Found in a complex with COPRS, RUNX1 and CBFB. Interacts with CHTOP; the interaction symmetrically methylates CHTOP, but seems to require the presence of PRMT1. Interacts with EPB41L3; this modulates methylation of target proteins. Component of a high molecular weight E2F-pocket protein complex, CERC (cyclin E1 repressor complex). Associates with SWI/SNF remodeling complexes containing SMARCA2 and SMARCA4. Interacts with JAK2, SSTR1, SUPT5H, BRAF and with active RAF1. Interacts with LSM11, PRMT7 and SNRPD3. Interacts with COPRS; promoting its recruitment on histone H4. Interacts with CLNS1A/pICln. Identified in a complex with CLNS1A/pICln and Sm proteins. Interacts with RPS10. Interacts with WDR77. Interacts with IWS1. Interacts with CRY1. Interacts with POLR2A. Interacts with SMN1/SMN2. Interacts with LYAR; this interaction is direct. Interacts with TTC5/STRAP; this interaction is DNA damage-dependent and promotes PRMT5 interaction with p53/TP53. Interacts with p53/TP53 in response to DNA damage; the interaction is TTC5/STRAP dependent. Interacts with FAM47E; the interaction is direct, promotes PRMT5 localization to chromatin, and does not disrupt its association with WDR77 or STUB1. Interacts with TDRD6. Interacts with STUB1. Interacts with MBD2. Does not interact with MBD3. As to expression, ubiquitous.

The protein localises to the cytoplasm. The protein resides in the nucleus. Its subcellular location is the chromosome. It is found in the golgi apparatus. The enzyme catalyses L-arginyl-[protein] + 2 S-adenosyl-L-methionine = N(omega),N(omega)'-dimethyl-L-arginyl-[protein] + 2 S-adenosyl-L-homocysteine + 2 H(+). Its activity is regulated as follows. Activity is increased by EGF, HGF, FGF1 or FGF2 treatments, and slightly decreased by NGF treatment. Its function is as follows. Arginine methyltransferase that can both catalyze the formation of omega-N monomethylarginine (MMA) and symmetrical dimethylarginine (sDMA), with a preference for the formation of MMA. Specifically mediates the symmetrical dimethylation of arginine residues in the small nuclear ribonucleoproteins Sm D1 (SNRPD1) and Sm D3 (SNRPD3); such methylation being required for the assembly and biogenesis of snRNP core particles. Methylates SUPT5H and may regulate its transcriptional elongation properties. May methylate the N-terminal region of MBD2. Mono- and dimethylates arginine residues of myelin basic protein (MBP) in vitro. May play a role in cytokine-activated transduction pathways. Negatively regulates cyclin E1 promoter activity and cellular proliferation. Methylates histone H2A and H4 'Arg-3' during germ cell development. Methylates histone H3 'Arg-8', which may repress transcription. Methylates the Piwi proteins (PIWIL1, PIWIL2 and PIWIL4), methylation of Piwi proteins being required for the interaction with Tudor domain-containing proteins and subsequent localization to the meiotic nuage. Methylates RPS10. Attenuates EGF signaling through the MAPK1/MAPK3 pathway acting at 2 levels. First, monomethylates EGFR; this enhances EGFR 'Tyr-1197' phosphorylation and PTPN6 recruitment, eventually leading to reduced SOS1 phosphorylation. Second, methylates RAF1 and probably BRAF, hence destabilizing these 2 signaling proteins and reducing their catalytic activity. Required for induction of E-selectin and VCAM-1, on the endothelial cells surface at sites of inflammation. Methylates HOXA9. Methylates and regulates SRGAP2 which is involved in cell migration and differentiation. Acts as a transcriptional corepressor in CRY1-mediated repression of the core circadian component PER1 by regulating the H4R3 dimethylation at the PER1 promoter. Methylates GM130/GOLGA2, regulating Golgi ribbon formation. Methylates H4R3 in genes involved in glioblastomagenesis in a CHTOP- and/or TET1-dependent manner. Symmetrically methylates POLR2A, a modification that allows the recruitment to POLR2A of proteins including SMN1/SMN2 and SETX. This is required for resolving RNA-DNA hybrids created by RNA polymerase II, that form R-loop in transcription terminal regions, an important step in proper transcription termination. Along with LYAR, binds the promoter of gamma-globin HBG1/HBG2 and represses its expression. Symmetrically methylates NCL. Methylates p53/TP53; methylation might possibly affect p53/TP53 target gene specificity. Involved in spliceosome maturation and mRNA splicing in prophase I spermatocytes through the catalysis of the symmetrical arginine dimethylation of SNRPB (small nuclear ribonucleoprotein-associated protein) and the interaction with tudor domain-containing protein TDRD6. This Homo sapiens (Human) protein is Protein arginine N-methyltransferase 5 (PRMT5).